A 163-amino-acid polypeptide reads, in one-letter code: MEALVALQQTLSWFLLLVVVILIFFLLLSCLTQLRRLITKRMTKMENNRKVRNQNHFCKVNIALAELLTVSTDDTDMPLEKKSNSINRRVPTCTYIYMCACVYMSDIYMSNRLSKVFTLIAASIGREYCQIADALQAKKPLKNRWENGLARLSDLRAWTLKVA.

The helical transmembrane segment at 11-31 (LSWFLLLVVVILIFFLLLSCL) threads the bilayer.

The protein resides in the membrane. This is an uncharacterized protein from Saccharomyces cerevisiae (strain ATCC 204508 / S288c) (Baker's yeast).